The chain runs to 146 residues: Hemoglobin subunit beta-2 (146 aa).

In terms of domain architecture, Globin spans E2 to H146. Residues H63 and H92 each coordinate heme b.

It belongs to the globin family. In terms of assembly, hb2 is a heterotetramer of two alpha chains and two beta-2 chains. Red blood cells.

Its function is as follows. Involved in oxygen transport from gills to the various peripheral tissues. The protein is Hemoglobin subunit beta-2 (hbb2) of Cygnodraco mawsoni (Antarctic dragonfish).